A 142-amino-acid polypeptide reads, in one-letter code: 3-hydroxyacyl-[acyl-carrier-protein] dehydratase FabZ (142 aa).

Residue His-41 is part of the active site.

This sequence belongs to the thioester dehydratase family. FabZ subfamily.

It is found in the cytoplasm. It catalyses the reaction a (3R)-hydroxyacyl-[ACP] = a (2E)-enoyl-[ACP] + H2O. Involved in unsaturated fatty acids biosynthesis. Catalyzes the dehydration of short chain beta-hydroxyacyl-ACPs and long chain saturated and unsaturated beta-hydroxyacyl-ACPs. The protein is 3-hydroxyacyl-[acyl-carrier-protein] dehydratase FabZ of Symbiobacterium thermophilum (strain DSM 24528 / JCM 14929 / IAM 14863 / T).